A 927-amino-acid chain; its full sequence is Disks large homolog 1 (927 aa).

In terms of domain architecture, L27 spans 4-64 (RKQDTQRALH…FYEVTLLDNP (61 aa)). Position 115 is a phosphothreonine (threonine 115). Serine 122, serine 138, and serine 158 each carry phosphoserine. An interaction with SH3 domains region spans residues 162–212 (PTEAVPPSSPTVPVIPVLPVPAENTVILPTIPQANPPPVLVNTDSLETSTY). The required for interaction with MARCHF2 stretch occupies residues 224 to 546 (EITLERGNSG…QAVTIVAQYR (323 aa)). PDZ domains follow at residues 230–317 (GNSG…SEKI), 325–412 (GPKG…YMND), and 474–555 (TGLG…RFEA). The residue at position 232 (serine 232) is a Phosphoserine. A Phosphotyrosine modification is found at tyrosine 399. Phosphoserine occurs at positions 568, 573, 575, 579, 598, 619, 707, 710, and 857. One can recognise an SH3 domain in the interval 581-651 (KRSLYVRALF…PSKRRVEKKE (71 aa)). A Guanylate kinase-like domain is found at 683 to 858 (RKFPFYKNKD…ISIFIKPKSM (176 aa)). The tract at residues 691 to 719 (KDQSEQETSDADQHITSNASDSESSYRGQ) is disordered. Residues 704–717 (HITSNASDSESSYR) show a composition bias toward polar residues.

The protein belongs to the MAGUK family. Homotetramer. Interacts (via guanylate kinase-like domain) with DLGAP1, DLGAP2, DLGAP3, DLGAP4 and MAP1A. Interacts (via guanylate kinase-like domain) with KIF13B. May interact with HTR2A. Interacts (via PDZ domains) with GRIA1. Interacts (via PDZ domains) with GRIN2A. Interacts (via PDZ domains) with KCND2 and KCND3. Interacts (via PDZ domains) with KCNA1, KCNA2, KCNA3 and KCNA4. Interacts (via PDZ domains) with ADGRA3. Interacts with KCNF1. Interacts with CAMK2. Interacts with cytoskeleton-associated protein EPB41. Interacts with cytoskeleton-associated protein EZR. Found in a complex with KCNA5 and CAV3. Found in a complex with APC and CTNNB1. Interacts (via PDZ domains) with APC. Interacts with CDH1 through binding to PIK3R1. Forms multiprotein complexes with CASK, LIN7A, LIN7B, LIN7C, APBA1, and KCNJ12. Interacts with TOPK. Forms a tripartite complex composed of DLG1, MPP7 and LIN7 (LIN7A or LIN7C). May interact with TJAP1. Interacts with PTEN. Interacts with FRMPD4 (via C-terminus). Interacts with LRFN1, LRFN2 and LRFN4. Interacts with SFPQ. Interacts (via PDZ domains) with ADGRA2 (via PDZ-binding motif). Interacts with ADAM10; this interaction recruits ADAM10 to the cell membrane during long-term depression in hippocampal neurons. Interacts with DGKI (via PDZ-binding motif). Interacts (via PDZ domains) with MARCHF2 (via PDZ domain); the interaction leads to DLG1 ubiqtuitination and degradation. Interacts (via N-terminus) with MPP3; this interaction connects CADM1 with DLG1 and links CADM1 with the regulatory subunit of phosphoinositide-3-kinase (PI3K) by forming a multiprotein complex and participates in cell spreading. Phosphorylated by MAPK12. Phosphorylation of Ser-232 regulates association with GRIN2A. In terms of processing, ubiquitinated; by MARCHF2 which results in its degradation.

The protein resides in the cell membrane. The protein localises to the basolateral cell membrane. It localises to the endoplasmic reticulum membrane. It is found in the postsynaptic density. Its subcellular location is the synapse. The protein resides in the sarcolemma. The protein localises to the apical cell membrane. It localises to the cell junction. It is found in the cytoplasm. In terms of biological role, essential multidomain scaffolding protein required for normal development. Recruits channels, receptors and signaling molecules to discrete plasma membrane domains in polarized cells. Promotes epithelial cell layer barrier function via maintaining cell-cell adhesion. May also play a role in adherens junction assembly, signal transduction, cell proliferation, synaptogenesis and lymphocyte activation. Regulates the excitability of cardiac myocytes by modulating the functional expression of Kv4 channels. Functional regulator of Kv1.5 channel. During long-term depression in hippocampal neurons, it recruits ADAM10 to the plasma membrane. The protein is Disks large homolog 1 (DLG1) of Canis lupus familiaris (Dog).